The following is a 352-amino-acid chain: DNA polymerase IV (352 aa).

In terms of domain architecture, UmuC spans 4 to 185 (IIHVDMDCFF…LPLSKIPGVG (182 aa)). Mg(2+) is bound by residues Asp8 and Asp103. The active site involves Glu104.

This sequence belongs to the DNA polymerase type-Y family. Monomer. Mg(2+) serves as cofactor.

It localises to the cytoplasm. It carries out the reaction DNA(n) + a 2'-deoxyribonucleoside 5'-triphosphate = DNA(n+1) + diphosphate. Its function is as follows. Poorly processive, error-prone DNA polymerase involved in untargeted mutagenesis. Copies undamaged DNA at stalled replication forks, which arise in vivo from mismatched or misaligned primer ends. These misaligned primers can be extended by PolIV. Exhibits no 3'-5' exonuclease (proofreading) activity. May be involved in translesional synthesis, in conjunction with the beta clamp from PolIII. This Yersinia enterocolitica serotype O:8 / biotype 1B (strain NCTC 13174 / 8081) protein is DNA polymerase IV.